Here is a 34-residue protein sequence, read N- to C-terminus: Calcitonin-like peptide 2 (34 aa).

Cysteine 2 and cysteine 7 are joined by a disulfide. Phenylalanine 34 carries the post-translational modification Phenylalanine amide.

This chain is Calcitonin-like peptide 2, found in Odorrana schmackeri (Schmacker's frog).